A 144-amino-acid polypeptide reads, in one-letter code: uncharacterized protein (144 aa).

The stretch at Glu-48–Leu-119 forms a coiled coil.

This is an uncharacterized protein from Archaeoglobus fulgidus (strain ATCC 49558 / DSM 4304 / JCM 9628 / NBRC 100126 / VC-16).